Consider the following 93-residue polypeptide: UPF0358 protein BPUM_1375 (93 aa).

The protein belongs to the UPF0358 family.

The protein is UPF0358 protein BPUM_1375 of Bacillus pumilus (strain SAFR-032).